The primary structure comprises 166 residues: Large ribosomal subunit protein bL19 (166 aa).

This sequence belongs to the bacterial ribosomal protein bL19 family.

Its function is as follows. This protein is located at the 30S-50S ribosomal subunit interface and may play a role in the structure and function of the aminoacyl-tRNA binding site. This Chelativorans sp. (strain BNC1) protein is Large ribosomal subunit protein bL19.